The chain runs to 190 residues: Mediator of RNA polymerase II transcription subunit 28 (190 aa).

Residues 76–108 are a coiled coil; that stretch reads MLIKDENQDLSIEIQRKEALLQKHYNRLEEWKA.

It belongs to the Mediator complex subunit 28 family. In terms of assembly, component of the Mediator complex.

It localises to the nucleus. Its function is as follows. Component of the Mediator complex, a coactivator involved in the regulated transcription of nearly all RNA polymerase II-dependent genes. Mediator functions as a bridge to convey information from gene-specific regulatory proteins to the basal RNA polymerase II transcription machinery. Mediator is recruited to promoters by direct interactions with regulatory proteins and serves as a scaffold for the assembly of a functional preinitiation complex with RNA polymerase II and the general transcription factors. This Drosophila pseudoobscura pseudoobscura (Fruit fly) protein is Mediator of RNA polymerase II transcription subunit 28 (MED28).